The primary structure comprises 232 residues: Thiamine import ATP-binding protein ThiQ (232 aa).

Residues 2-230 form the ABC transporter domain; it reads LKLTDITWLY…KASASALLGI (229 aa). 32 to 39 contributes to the ATP binding site; the sequence is GPSGAGKS.

It belongs to the ABC transporter superfamily. Thiamine importer (TC 3.A.1.19.1) family. In terms of assembly, the complex is composed of two ATP-binding proteins (ThiQ), two transmembrane proteins (ThiP) and a solute-binding protein (ThiB).

The protein resides in the cell inner membrane. It carries out the reaction thiamine(out) + ATP + H2O = thiamine(in) + ADP + phosphate + H(+). Part of the ABC transporter complex ThiBPQ involved in thiamine import. Responsible for energy coupling to the transport system. The chain is Thiamine import ATP-binding protein ThiQ from Escherichia coli O157:H7.